The primary structure comprises 35 residues: Cecropin-A (35 aa).

A Leucine amide modification is found at Leu-35.

Monomer. Hemolymph.

The protein resides in the secreted. Cecropins have lytic and antibacterial activity against several Gram-positive and Gram-negative bacteria. Also has activity against fungi. This Heliothis virescens (Tobacco budworm moth) protein is Cecropin-A.